The chain runs to 450 residues: Bifunctional protein GlmU (450 aa).

The segment at 1 to 229 (MGVALIVLAA…EAETLGINTR (229 aa)) is pyrophosphorylase. Residues 8-11 (LAAG), K22, Q75, 80-81 (GT), 103-105 (YGD), G141, E155, N170, and N227 each bind UDP-N-acetyl-alpha-D-glucosamine. D105 contacts Mg(2+). N227 provides a ligand contact to Mg(2+). A linker region spans residues 230-250 (TELAAAEQAFQARARARALED). The N-acetyltransferase stretch occupies residues 251–450 (GVTLADPATT…RARKSAKGAQ (200 aa)). R316 and K334 together coordinate UDP-N-acetyl-alpha-D-glucosamine. The active-site Proton acceptor is the H346. Positions 349 and 360 each coordinate UDP-N-acetyl-alpha-D-glucosamine. Acetyl-CoA is bound by residues A363, 369–370 (NY), S388, T406, and R423.

The protein in the N-terminal section; belongs to the N-acetylglucosamine-1-phosphate uridyltransferase family. In the C-terminal section; belongs to the transferase hexapeptide repeat family. As to quaternary structure, homotrimer. The cofactor is Mg(2+).

Its subcellular location is the cytoplasm. It carries out the reaction alpha-D-glucosamine 1-phosphate + acetyl-CoA = N-acetyl-alpha-D-glucosamine 1-phosphate + CoA + H(+). It catalyses the reaction N-acetyl-alpha-D-glucosamine 1-phosphate + UTP + H(+) = UDP-N-acetyl-alpha-D-glucosamine + diphosphate. Its pathway is nucleotide-sugar biosynthesis; UDP-N-acetyl-alpha-D-glucosamine biosynthesis; N-acetyl-alpha-D-glucosamine 1-phosphate from alpha-D-glucosamine 6-phosphate (route II): step 2/2. It participates in nucleotide-sugar biosynthesis; UDP-N-acetyl-alpha-D-glucosamine biosynthesis; UDP-N-acetyl-alpha-D-glucosamine from N-acetyl-alpha-D-glucosamine 1-phosphate: step 1/1. It functions in the pathway bacterial outer membrane biogenesis; LPS lipid A biosynthesis. Catalyzes the last two sequential reactions in the de novo biosynthetic pathway for UDP-N-acetylglucosamine (UDP-GlcNAc). The C-terminal domain catalyzes the transfer of acetyl group from acetyl coenzyme A to glucosamine-1-phosphate (GlcN-1-P) to produce N-acetylglucosamine-1-phosphate (GlcNAc-1-P), which is converted into UDP-GlcNAc by the transfer of uridine 5-monophosphate (from uridine 5-triphosphate), a reaction catalyzed by the N-terminal domain. This is Bifunctional protein GlmU from Dinoroseobacter shibae (strain DSM 16493 / NCIMB 14021 / DFL 12).